A 121-amino-acid chain; its full sequence is Basic phospholipase A2 BmTX-I (121 aa).

Disulfide bonds link Cys-26–Cys-114, Cys-28–Cys-45, Cys-44–Cys-95, Cys-50–Cys-121, Cys-51–Cys-88, Cys-58–Cys-82, and Cys-76–Cys-86. Residues Tyr-27, Gly-29, and Gly-31 each contribute to the Ca(2+) site. The active site involves His-48. Asp-49 contacts Ca(2+). Residue Asp-89 is part of the active site.

The cofactor is Ca(2+). As to expression, expressed by the venom gland.

It is found in the secreted. It catalyses the reaction a 1,2-diacyl-sn-glycero-3-phosphocholine + H2O = a 1-acyl-sn-glycero-3-phosphocholine + a fatty acid + H(+). Inhibited by magnesium, cadmium and manganese ions. Also inhibited by crotapotin. Snake venom phospholipase A2 (PLA2) that shows enzymatic activity in the presence of a synthetic substrate. In vitro, blocks the neuromuscular transmission in young chick biventer cervicis preparations. In mice, induces myonecrosis and a systemic interleukin-6 response upon intramuscular injection. Also induces edema and exerts a strong pro-inflammatory effect. PLA2 catalyzes the calcium-dependent hydrolysis of the 2-acyl groups in 3-sn-phosphoglycerides. The protein is Basic phospholipase A2 BmTX-I of Bothrops moojeni (Lance-headed viper).